Consider the following 191-residue polypeptide: Large ribosomal subunit protein bL9 (191 aa).

The interval 151–191 (AERQAKGESLTSADAIYGVDEDALKPEDFFNPEAEIESEEE) is disordered.

The protein belongs to the bacterial ribosomal protein bL9 family.

Functionally, binds to the 23S rRNA. The protein is Large ribosomal subunit protein bL9 of Sinorhizobium medicae (strain WSM419) (Ensifer medicae).